A 358-amino-acid chain; its full sequence is Gentisate 1,2-dioxygenase (358 aa).

A Cupin type-1 domain is found at 239 to 358 (QTLRQRAEND…AFNFYAEAEP (120 aa)).

It belongs to the gentisate 1,2-dioxygenase family. In terms of assembly, homotetramer.

The catalysed reaction is 2,5-dihydroxybenzoate + O2 = 3-maleylpyruvate + H(+). The protein operates within aromatic compound metabolism; naphthalene degradation. Its activity is regulated as follows. Inhibited by 2,2'-dipyridyl. Functionally, catalyzes the oxygen-dependent ring fission of gentisate between the carboxyl and proximal hydroxyl groups at positions 1 and 2 of the aromatic ring to form maleylpyruvate. No activity with cathechol and protecatechuate as substrates. Part of a 3-hydroxybenzoic acid-degradation pathway. The protein is Gentisate 1,2-dioxygenase (gdoA) of Haloferax sp.